The following is a 180-amino-acid chain: Nucleoside-triphosphatase THEP1 (180 aa).

ATP is bound by residues 18–25 (GRPGVGKT) and 104–111 (LVIMDEIG).

The protein belongs to the THEP1 NTPase family.

The enzyme catalyses a ribonucleoside 5'-triphosphate + H2O = a ribonucleoside 5'-diphosphate + phosphate + H(+). Functionally, has nucleotide phosphatase activity towards ATP, GTP, CTP, TTP and UTP. May hydrolyze nucleoside diphosphates with lower efficiency. The sequence is that of Nucleoside-triphosphatase THEP1 from Metallosphaera sedula (strain ATCC 51363 / DSM 5348 / JCM 9185 / NBRC 15509 / TH2).